A 91-amino-acid polypeptide reads, in one-letter code: Large ribosomal subunit protein eL43 (91 aa).

Residues 38–59 (CNFCGKDSLKRKAAGIWECKAC) form a C4-type zinc finger.

The protein belongs to the eukaryotic ribosomal protein eL43 family.

In Schistosoma mansoni (Blood fluke), this protein is Large ribosomal subunit protein eL43.